We begin with the raw amino-acid sequence, 438 residues long: Malic acid transport protein (438 aa).

10 helical membrane passes run 37–57 (SWFACTMATGGVGLIIGSFPF), 65–85 (IGKIVYILQIFLFSLFGSCML), 106–126 (LFIATCLLSISTFIDMLAIYA), 140–160 (ILYYIYVAVSFIYCVMAFFTI), 172–192 (SPAWILPIFPPMICGVIAGAV), 205–225 (VIFGILFQGLGFWVYLLLFAV), 242–262 (PGMFMFVGPPAFSGLALINIA), 288–308 (FMAIFIWGLAAWCYCLAMVSF), 321–341 (ACGWFAFIFPNVGFVNCTIEI), and 353–373 (FGHIIGVILCIQWILLMYLMV). A disordered region spans residues 390–438 (AHPPPKPNTGVLNPTFPPEKAPASLEKVDTHVTSTGGESDPPSSEHESV). Phosphoserine occurs at positions 413, 423, 428, 432, 433, and 437.

The protein belongs to the tellurite-resistance/dicarboxylate transporter (TDT) family.

It localises to the membrane. Functionally, permease for malate and other C4 dicarboxylic acids. The polypeptide is Malic acid transport protein (mae1) (Schizosaccharomyces pombe (strain 972 / ATCC 24843) (Fission yeast)).